A 91-amino-acid chain; its full sequence is MAFVRSLLGAKKILSRSTTAASAAPKGFLAVYVGESQKKRYLVPISYLNQPSFQALLSKSEEEFGFDHPMGGLTIPCPEDTFINVTSRFQR.

The protein belongs to the ARG7 family.

It localises to the cell membrane. In terms of biological role, functions as a positive effector of cell expansion through modulation of auxin transport. The sequence is that of Auxin-responsive protein SAUR20 from Arabidopsis thaliana (Mouse-ear cress).